The primary structure comprises 289 residues: uncharacterized protein (289 aa).

Glu48 is an active-site residue.

Belongs to the PhzF family.

This is an uncharacterized protein from Pasteurella multocida (strain Pm70).